We begin with the raw amino-acid sequence, 363 residues long: Flagellar P-ring protein (363 aa).

An N-terminal signal peptide occupies residues 1 to 20; that stretch reads MKIKVLLAVALLAMTVPVKA.

Belongs to the FlgI family. The basal body constitutes a major portion of the flagellar organelle and consists of four rings (L,P,S, and M) mounted on a central rod.

The protein resides in the periplasm. The protein localises to the bacterial flagellum basal body. In terms of biological role, assembles around the rod to form the L-ring and probably protects the motor/basal body from shearing forces during rotation. This chain is Flagellar P-ring protein, found in Shewanella amazonensis (strain ATCC BAA-1098 / SB2B).